The sequence spans 146 residues: Ribonuclease H (146 aa).

The 141-residue stretch at 1-141 folds into the RNase H type-1 domain; sequence MKHVDIFTDG…ADELARKGME (141 aa). Positions 9, 47, 69, and 133 each coordinate Mg(2+). The interval 123-146 is disordered; the sequence is HAGHPENERADELARKGMEPFKRR. Residues 125–146 are compositionally biased toward basic and acidic residues; it reads GHPENERADELARKGMEPFKRR.

The protein belongs to the RNase H family. In terms of assembly, monomer. It depends on Mg(2+) as a cofactor.

It localises to the cytoplasm. The catalysed reaction is Endonucleolytic cleavage to 5'-phosphomonoester.. Endonuclease that specifically degrades the RNA of RNA-DNA hybrids. This Agrobacterium fabrum (strain C58 / ATCC 33970) (Agrobacterium tumefaciens (strain C58)) protein is Ribonuclease H.